The chain runs to 676 residues: Zinc finger protein 418 (676 aa).

The 87-residue stretch at 5–91 (VAFEDVAVNF…HSCEMCGAIL (87 aa)) folds into the KRAB domain. 16 consecutive C2H2-type zinc fingers follow at residues 82–105 (HSCE…GTHH), 230–252 (CYCW…QRVH), 258–280 (YECG…QRVH), 286–308 (YECG…QRVH), 314–336 (YECG…QRVH), 342–364 (YECE…QRGH), 370–392 (YECE…HRVH), 398–420 (YECG…QRGH), 426–448 (YECG…QRSH), 454–476 (YECR…QRVH), 482–504 (YECN…QRVH), 510–532 (FECS…RRVH), 538–560 (YECG…QKTH), 591–613 (YECR…QRLH), 619–641 (YECS…RRVH), and 647–669 (YECS…QRVH).

Belongs to the krueppel C2H2-type zinc-finger protein family. In terms of tissue distribution, highly expressed in heart.

Its subcellular location is the nucleus. Transcriptional repressor. May play a role as regulator of the ubiquitin-proteasome system and autophagy-lysosomal pathway. The chain is Zinc finger protein 418 (ZNF418) from Homo sapiens (Human).